A 510-amino-acid polypeptide reads, in one-letter code: Maturase K (510 aa).

This sequence belongs to the intron maturase 2 family. MatK subfamily.

The protein resides in the plastid. Its subcellular location is the chloroplast. Its function is as follows. Usually encoded in the trnK tRNA gene intron. Probably assists in splicing its own and other chloroplast group II introns. The chain is Maturase K from Grahamia bracteata.